A 593-amino-acid polypeptide reads, in one-letter code: MEGKWLLCMLLVLGTTIVQAHEGHDDDMIDIEDDLDDVIEEVEDSKSKPDTSAPTSPKVTYKAPVPTGEVYFADSFDRGTLSGWILSKAKKDDTDDEIAKYDGKWEVDEMKETKLPGDKGLVLMSRAKHHAISAKLNKPFLFDTKPLIVQYEVNFQNGIECGGAYVKLLSKTPELNLDQFHDKTPYTIMFGPDKCGEDYKLHFIFRHKNPKTGVYEEKHAKRPDADLKTYFTDKKTHLYTLILNPDNSFEILVDQSIVNSGNLLNDMTPPVNPSREIEDPEDQKPEDWDERPKIPDPDAVKPDDWNEDAPAKIPDEEATKPDGWLDDEPEYVPDPDAEKPEDWDEDMDGEWEAPQIANPKCESAPGCGVWQRPMIDNPNYKGKWKPPMIDNPNYQGIWKPRKIPNPDFFEDLEPFKMTPFSAIGLELWSMTSDIFFDNFIVCGDRRVVDDWANDGWGLKKAADGAAEPGVVGQMIEAAEERPWLWVVYVLTVALPVFLVILFCCSGKKQSSPVEYKKTDAPQPDVKEEEEEKEEEKDKGDEEEEGEEKLEEKQKSDAEEDGGTASQEEDDRKPKAEEDEILNRSPRNRKPRRE.

A signal peptide spans 1–20; the sequence is MEGKWLLCMLLVLGTTIVQA. Residues 21 to 482 are Lumenal-facing; sequence HEGHDDDMID…QMIEAAEERP (462 aa). Residues S75 and D118 each contribute to the Ca(2+) site. K138 bears the N6-acetyllysine mark. C161 and C195 are disulfide-bonded. Y165, K167, Y186, and D193 together coordinate an alpha-D-glucoside. The tract at residues 261–346 is disordered; the sequence is GNLLNDMTPP…AEKPEDWDED (86 aa). The p domain (Extended arm) stretch occupies residues 277–410; it reads IEDPEDQKPE…RKIPNPDFFE (134 aa). Tandem repeats lie at residues 279–290, 296–307, 315–326, 334–345, and 349–359. 2 4 X approximate repeats regions span residues 279–345 and 349–406; these read DPED…DWDE and GEWE…IPNP. Basic and acidic residues predominate over residues 282–320; the sequence is DQKPEDWDERPKIPDPDAVKPDDWNEDAPAKIPDEEATK. Over residues 324-346 the composition is skewed to acidic residues; the sequence is WLDDEPEYVPDPDAEKPEDWDED. The interval 327–360 is interaction with PPIB; the sequence is DEPEYVPDPDAEKPEDWDEDMDGEWEAPQIANPK. C361 and C367 form a disulfide bridge. 3 consecutive repeat copies span residues 368–378, 382–392, and 396–406. An alpha-D-glucoside is bound at residue E426. Ca(2+) is bound at residue D437. A helical transmembrane segment spans residues 483–503; the sequence is WLWVVYVLTVALPVFLVILFC. S-palmitoyl cysteine attachment occurs at residues C503 and C504. Residues 504–593 are Cytoplasmic-facing; that stretch reads CSGKKQSSPV…SPRNRKPRRE (90 aa). The segment at 504–593 is sufficient to mediate interaction with SGIP1; it reads CSGKKQSSPV…SPRNRKPRRE (90 aa). The interval 511-593 is disordered; it reads SPVEYKKTDA…SPRNRKPRRE (83 aa). Positions 526–548 are enriched in acidic residues; sequence KEEEEEKEEEKDKGDEEEEGEEK. S555 is subject to Phosphoserine. T563 is subject to Phosphothreonine. Phosphoserine; by MAPK3 is present on S565. Residue S584 is modified to Phosphoserine.

It belongs to the calreticulin family. In terms of assembly, interacts with MAPK3/ERK1. Interacts with KCNH2. Associates with ribosomes. Interacts with SGIP1; involved in negative regulation of endocytosis. The palmitoylated form interacts with the ribosome-translocon complex component SSR1, promoting efficient folding of glycoproteins. Interacts with SERPINA2P/SERPINA2 and with the S and Z variants of SERPINA1. Interacts with PPIB. Interacts with ZNRF4. Interacts with SMIM22. Interacts with TMX2. Interacts with TMEM35A/NACHO and CHRNA7. Interacts with reticulophagy regulators RETREG2 and RETREG3. Interacts with DNM1L; may form part of a larger protein complex at the ER-mitochondrial interface during mitochondrial fission. Interacts with ADAM7. Post-translationally, phosphorylated at Ser-565 by MAPK3/ERK1. Phosphorylation by MAPK3/ERK1 increases its association with ribosomes. In terms of processing, palmitoylation by DHHC6 leads to the preferential localization to the perinuclear rough ER. It mediates the association of calnexin with the ribosome-translocon complex (RTC) which is required for efficient folding of glycosylated proteins. Ubiquitinated, leading to proteasomal degradation. Probably ubiquitinated by ZNRF4.

It localises to the endoplasmic reticulum membrane. The protein localises to the mitochondrion membrane. The protein resides in the melanosome membrane. Functionally, calcium-binding protein that interacts with newly synthesized monoglucosylated glycoproteins in the endoplasmic reticulum. It may act in assisting protein assembly and/or in the retention within the ER of unassembled protein subunits. It seems to play a major role in the quality control apparatus of the ER by the retention of incorrectly folded proteins. Associated with partial T-cell antigen receptor complexes that escape the ER of immature thymocytes, it may function as a signaling complex regulating thymocyte maturation. Additionally it may play a role in receptor-mediated endocytosis at the synapse. The protein is Calnexin (CANX) of Canis lupus familiaris (Dog).